We begin with the raw amino-acid sequence, 371 residues long: Dual-specificity RNA methyltransferase RlmN (371 aa).

Residue E114 is the Proton acceptor of the active site. Residues 120 to 352 (EEDHFTLCVS…VMTRQSKGAD (233 aa)) form the Radical SAM core domain. A disulfide bond links C127 and C357. Positions 134, 138, and 141 each coordinate [4Fe-4S] cluster. Residues 183 to 184 (GE), S216, 238 to 240 (SLN), and N314 each bind S-adenosyl-L-methionine. C357 acts as the S-methylcysteine intermediate in catalysis.

It belongs to the radical SAM superfamily. RlmN family. It depends on [4Fe-4S] cluster as a cofactor.

The protein localises to the cytoplasm. The enzyme catalyses adenosine(2503) in 23S rRNA + 2 reduced [2Fe-2S]-[ferredoxin] + 2 S-adenosyl-L-methionine = 2-methyladenosine(2503) in 23S rRNA + 5'-deoxyadenosine + L-methionine + 2 oxidized [2Fe-2S]-[ferredoxin] + S-adenosyl-L-homocysteine. The catalysed reaction is adenosine(37) in tRNA + 2 reduced [2Fe-2S]-[ferredoxin] + 2 S-adenosyl-L-methionine = 2-methyladenosine(37) in tRNA + 5'-deoxyadenosine + L-methionine + 2 oxidized [2Fe-2S]-[ferredoxin] + S-adenosyl-L-homocysteine. Specifically methylates position 2 of adenine 2503 in 23S rRNA and position 2 of adenine 37 in tRNAs. m2A2503 modification seems to play a crucial role in the proofreading step occurring at the peptidyl transferase center and thus would serve to optimize ribosomal fidelity. This is Dual-specificity RNA methyltransferase RlmN from Desulfosudis oleivorans (strain DSM 6200 / JCM 39069 / Hxd3) (Desulfococcus oleovorans).